The sequence spans 343 residues: Small ribosomal subunit biogenesis GTPase RsgA (343 aa).

The segment at 1–32 (MAKRRLSKRQVDRIRERQSQRLDTSVAAPDGK) is disordered. A compositionally biased stretch (basic and acidic residues) spans 9-20 (RQVDRIRERQSQ). A CP-type G domain is found at 109 to 273 (YGKLKPVAAN…CIDSPGIREF (165 aa)). GTP is bound by residues 156-159 (NKLD) and 215-223 (GQSGVGKSS). Cysteine 297, cysteine 302, histidine 304, and cysteine 310 together coordinate Zn(2+).

The protein belongs to the TRAFAC class YlqF/YawG GTPase family. RsgA subfamily. As to quaternary structure, monomer. Associates with 30S ribosomal subunit, binds 16S rRNA. Zn(2+) is required as a cofactor.

The protein localises to the cytoplasm. One of several proteins that assist in the late maturation steps of the functional core of the 30S ribosomal subunit. Helps release RbfA from mature subunits. May play a role in the assembly of ribosomal proteins into the subunit. Circularly permuted GTPase that catalyzes slow GTP hydrolysis, GTPase activity is stimulated by the 30S ribosomal subunit. This Saccharophagus degradans (strain 2-40 / ATCC 43961 / DSM 17024) protein is Small ribosomal subunit biogenesis GTPase RsgA.